The chain runs to 119 residues: Large ribosomal subunit protein eL31z (119 aa).

This sequence belongs to the eukaryotic ribosomal protein eL31 family.

This chain is Large ribosomal subunit protein eL31z (RPL31A), found in Arabidopsis thaliana (Mouse-ear cress).